Reading from the N-terminus, the 580-residue chain is Serine/threonine-protein kinase PINK1, mitochondrial (580 aa).

A mitochondrion-targeting transit peptide spans 1-77; it reads MAVRQALGRG…RFFRQSVAGL (77 aa). Residues 78 to 93 lie on the Mitochondrial intermembrane side of the membrane; the sequence is AARIQRQFMVRARGGA. The helical transmembrane segment at 94–110 threads the bilayer; sequence GPCGRAVFLAFGLGLGL. The segment at 111 to 117 is required for outer membrane localization; sequence IEEKQAE. Residues 111 to 580 lie on the Cytoplasmic side of the membrane; the sequence is IEEKQAEGRR…LLLSSWRAAP (470 aa). The region spanning 156–510 is the Protein kinase domain; it reads YLIGQAIGKG…LAANVLHLSL (355 aa). ATP-binding positions include 162 to 170 and Lys186; that span reads IGKGCNAAV. Ser227 carries the post-translational modification Phosphoserine; by autocatalysis. Catalysis depends on Asp361, which acts as the Proton acceptor. Ser401 is modified (phosphoserine; by autocatalysis).

It belongs to the protein kinase superfamily. Ser/Thr protein kinase family. In terms of assembly, upon mitochondrial depolarization, it forms a supercomplex with TOM and TIM23 complexes. PINK1-TOM-TIM23 supercomplex formation requires PINK1 interaction with TOMM20 and TOMM70 and is critical for PINK1 stabilization at the outer mitochondrial membrane, kinase activation and downstream mitophagy. Upon mitochondrial depolarization, interacts with TIMM23; the interaction is required for PINK1 accumulation at the outer mitochondrial membrane, kinase activation by autophosphorylation and PRKN recruitement to mitochondria. Interacts with PRKN. Interacts with FBXO7. Forms a complex with PRKN and PARK7. Interacts with NENF. Mg(2+) is required as a cofactor. Proteolytically cleaved. In healthy cells, the precursor is continuously imported into the inner mitochondrial membrane (IMM), where it is proteolytically cleaved by mitochondrial-processing peptidase (MPP) and then undergoes further proteolytic cleavage by PARL or AFG3L2 to give rise to the 52 kDa short form. The 52 kDa short form is then released into the cytosol where it rapidly undergoes proteasome-dependent degradation. In unhealthy cells, when cellular stress conditions lead to the loss of mitochondrial membrane potential, mitochondrial import is impaired leading to the precursor accumulating on the outer mitochondrial membrane (OMM). If accumulation at the OMM fails and it is imported into the depolarized mitochondria, it undergoes cleavage by the IMM protease OMA1, promoting its subsequent degradation by the proteasome. Post-translationally, autophosphorylated. Loss of mitochondrial membrane potential results in the precursor accumulating on the outer mitochondrial membrane (OMM) where it is activated by autophosphorylation. Autophosphorylation at Ser-227 and Ser-401 is essential for selective recruitment of PRKN to depolarized mitochondria, via PINK1-dependent phosphorylation of ubiquitin and PRKN. High levels expressed in testis, lower levels in brain, heart, lung, liver and kidney.

It localises to the mitochondrion outer membrane. Its subcellular location is the mitochondrion inner membrane. The protein localises to the cytoplasm. It is found in the cytosol. The catalysed reaction is L-seryl-[protein] + ATP = O-phospho-L-seryl-[protein] + ADP + H(+). It catalyses the reaction L-threonyl-[protein] + ATP = O-phospho-L-threonyl-[protein] + ADP + H(+). Functionally, serine/threonine-protein kinase which acts as a sensor of mitochondrial damage and protects against mitochondrial dysfunction during cellular stress. It phosphorylates mitochondrial proteins to coordinate mitochondrial quality control mechanisms that remove and replace dysfunctional mitochondrial components. Depending on the severity of mitochondrial damage, activity ranges from preventing apoptosis and stimulating mitochondrial biogenesis to eliminating severely damaged mitochondria via PINK1-PRKN-dependent mitophagy. When cellular stress results in irreversible mitochondrial damage, PINK1 accumulates at the outer mitochondrial membrane (OMM) where it phosphorylates pre-existing polyubiquitin chains at 'Ser-65', recruits PRKN from the cytosol to the OMM and activates PRKN by phosphorylation at 'Ser-65'. Activated PRKN then ubiquinates VDAC1 and other OMM proteins to initiate mitophagy. The PINK1-PRKN pathway also promotes fission of damaged mitochondria by phosphorylating and thus promoting the PRKN-dependent degradation of mitochondrial proteins involved in fission such as MFN2. This prevents the refusion of unhealthy mitochondria with the mitochondrial network or initiates mitochondrial fragmentation facilitating their later engulfment by autophagosomes. Also promotes mitochondrial fission independently of PRKN and ATG7-mediated mitophagy, via the phosphorylation and activation of DNM1L. Regulates motility of damaged mitochondria by promoting the ubiquitination and subsequent degradation of MIRO1 and MIRO2; in motor neurons, this likely inhibits mitochondrial intracellular anterograde transport along the axons which probably increases the chance of the mitochondria undergoing mitophagy in the soma. Required for ubiquinone reduction by mitochondrial complex I by mediating phosphorylation of complex I subunit NDUFA10. Phosphorylates LETM1, positively regulating its mitochondrial calcium transport activity. This is Serine/threonine-protein kinase PINK1, mitochondrial (Pink1) from Mus musculus (Mouse).